Here is a 242-residue protein sequence, read N- to C-terminus: Flavin prenyltransferase PAD1, mitochondrial (242 aa).

The transit peptide at 1–58 directs the protein to the mitochondrion; sequence MLLFPRRTNIAFFKTTGIFANFPLLGRTITTSPSFLTHKLSKEVTRASTSPPRPKRIV. Residues 63-65, Ser-89, 140-143, and Arg-175 each bind FMN; these read GAT and SMKS. 2 residues coordinate dimethylallyl phosphate: Tyr-205 and Arg-221.

Belongs to the UbiX/PAD1 family. As to quaternary structure, oligomer.

Its subcellular location is the mitochondrion. The catalysed reaction is dimethylallyl phosphate + FMNH2 = prenylated FMNH2 + phosphate. Its function is as follows. Flavin prenyltransferase that catalyzes the synthesis of the prenylated FMN cofactor (prenyl-FMN) for the ferulic acid decarboxylase FDC1/ubiD. The prenyltransferase is metal-independent and links a dimethylallyl moiety from dimethylallyl monophosphate (DMAP) to the flavin N5 and C6 atoms of FMN. Involved in the decarboxylation of phenylacrylic acids like ferulic acid, p-coumaric acid or cinnamic acid, producing the corresponding vinyl derivatives which play the role of aroma metabolites. Also involved in the degradation of the food preservative sorbic acid (2,4-hexadienoic acid) to a volatile hydrocarbon, 1,3-pentadiene. Not essential for ubiquinone synthesis. Can rescue Q biosynthesis in E.coli strains lacking UbiX. Has mRNA binding activity. The protein is Flavin prenyltransferase PAD1, mitochondrial of Saccharomyces cerevisiae (strain ATCC 204508 / S288c) (Baker's yeast).